The primary structure comprises 458 residues: Cysteine--tRNA ligase (458 aa).

Cysteine 33 provides a ligand contact to Zn(2+). The 'HIGH' region motif lies at 35–45 (PTVYDFAHIGN). Positions 221, 246, and 250 each coordinate Zn(2+). Positions 279–283 (KMSKS) match the 'KMSKS' region motif. Residue lysine 282 coordinates ATP.

This sequence belongs to the class-I aminoacyl-tRNA synthetase family. As to quaternary structure, monomer. Zn(2+) is required as a cofactor.

Its subcellular location is the cytoplasm. The enzyme catalyses tRNA(Cys) + L-cysteine + ATP = L-cysteinyl-tRNA(Cys) + AMP + diphosphate. The protein is Cysteine--tRNA ligase of Rhizobium etli (strain ATCC 51251 / DSM 11541 / JCM 21823 / NBRC 15573 / CFN 42).